Reading from the N-terminus, the 64-residue chain is Large ribosomal subunit protein bL33 (64 aa).

Residues 16 to 25 (EARTSSEPRR) show a composition bias toward basic and acidic residues. Residues 16–41 (EARTSSEPRRSNGVSRYTTEKNKRNT) form a disordered region.

The protein belongs to the bacterial ribosomal protein bL33 family.

The protein is Large ribosomal subunit protein bL33 of Prochlorococcus marinus subsp. pastoris (strain CCMP1986 / NIES-2087 / MED4).